Consider the following 476-residue polypeptide: Bifunctional protein HldE (476 aa).

The tract at residues 1–318 is ribokinase; it reads MFQYSAEFKQ…ENAIHGRSNT (318 aa). 195–198 lines the ATP pocket; it reads NMSE. Asp-264 is a catalytic residue. The tract at residues 344-476 is cytidylyltransferase; that stretch reads MTNGCFDILH…VISKIQQLKD (133 aa).

This sequence in the N-terminal section; belongs to the carbohydrate kinase PfkB family. It in the C-terminal section; belongs to the cytidylyltransferase family. Homodimer.

The catalysed reaction is D-glycero-beta-D-manno-heptose 7-phosphate + ATP = D-glycero-beta-D-manno-heptose 1,7-bisphosphate + ADP + H(+). The enzyme catalyses D-glycero-beta-D-manno-heptose 1-phosphate + ATP + H(+) = ADP-D-glycero-beta-D-manno-heptose + diphosphate. It functions in the pathway nucleotide-sugar biosynthesis; ADP-L-glycero-beta-D-manno-heptose biosynthesis; ADP-L-glycero-beta-D-manno-heptose from D-glycero-beta-D-manno-heptose 7-phosphate: step 1/4. The protein operates within nucleotide-sugar biosynthesis; ADP-L-glycero-beta-D-manno-heptose biosynthesis; ADP-L-glycero-beta-D-manno-heptose from D-glycero-beta-D-manno-heptose 7-phosphate: step 3/4. It participates in bacterial outer membrane biogenesis; LPS core biosynthesis. In terms of biological role, catalyzes the phosphorylation of D-glycero-D-manno-heptose 7-phosphate at the C-1 position to selectively form D-glycero-beta-D-manno-heptose-1,7-bisphosphate. Catalyzes the ADP transfer from ATP to D-glycero-beta-D-manno-heptose 1-phosphate, yielding ADP-D-glycero-beta-D-manno-heptose. This is Bifunctional protein HldE from Pasteurella multocida (strain Pm70).